The primary structure comprises 239 residues: tRNA (guanine-N(7)-)-methyltransferase (239 aa).

S-adenosyl-L-methionine-binding residues include Glu69, Glu94, Asp121, and Asp144. Asp144 is a catalytic residue. Lys148 lines the substrate pocket. The interval 150-155 is interaction with RNA; it reads RHNKRR. Residues Asp180 and 217–220 each bind substrate; that span reads TKFE.

It belongs to the class I-like SAM-binding methyltransferase superfamily. TrmB family. In terms of assembly, monomer.

The enzyme catalyses guanosine(46) in tRNA + S-adenosyl-L-methionine = N(7)-methylguanosine(46) in tRNA + S-adenosyl-L-homocysteine. It functions in the pathway tRNA modification; N(7)-methylguanine-tRNA biosynthesis. In terms of biological role, catalyzes the formation of N(7)-methylguanine at position 46 (m7G46) in tRNA. The polypeptide is tRNA (guanine-N(7)-)-methyltransferase (Cronobacter sakazakii (strain ATCC BAA-894) (Enterobacter sakazakii)).